The chain runs to 97 residues: DNA/RNA-binding protein Alba (97 aa).

Residue Lys15 is modified to N6-acetyllysine.

The protein belongs to the histone-like Alba family. Acetylated. Acetylation at Lys-15 decreases DNA-binding affinity.

It is found in the cytoplasm. The protein resides in the chromosome. Binds double-stranded DNA tightly but without sequence specificity. Involved in DNA compaction. This chain is DNA/RNA-binding protein Alba, found in Ignicoccus hospitalis (strain KIN4/I / DSM 18386 / JCM 14125).